Consider the following 251-residue polypeptide: Putative fatty acid elongase DDB_G0274669 (251 aa).

The next 5 membrane-spanning stretches (helical) occupy residues 51–71 (FQIIPIVLVIYLVTIFSIKFL), 82–102 (FISILHNAILCIWSLIMCVGV), 135–155 (WSYIFYISKFYELLDTVIIVL), 177–197 (YITMIQILQFVCLGIAGVLHV), and 211–231 (AFAAAYSINFSFLFLFSKFFV).

It belongs to the ELO family.

The protein resides in the membrane. The enzyme catalyses a very-long-chain acyl-CoA + malonyl-CoA + H(+) = a very-long-chain 3-oxoacyl-CoA + CO2 + CoA. Its function is as follows. Could be implicated in synthesis of very long chain fatty acids. The polypeptide is Putative fatty acid elongase DDB_G0274669 (Dictyostelium discoideum (Social amoeba)).